The following is a 313-amino-acid chain: tRNA dimethylallyltransferase (313 aa).

17-24 is a binding site for ATP; that stretch reads GPTASGKT. Residue 19–24 participates in substrate binding; the sequence is TASGKT. Interaction with substrate tRNA stretches follow at residues 42–45, 166–170, and 247–252; these read DSAL, QRLSR, and RCVGYR.

The protein belongs to the IPP transferase family. As to quaternary structure, monomer. The cofactor is Mg(2+).

It carries out the reaction adenosine(37) in tRNA + dimethylallyl diphosphate = N(6)-dimethylallyladenosine(37) in tRNA + diphosphate. Catalyzes the transfer of a dimethylallyl group onto the adenine at position 37 in tRNAs that read codons beginning with uridine, leading to the formation of N6-(dimethylallyl)adenosine (i(6)A). In Pectobacterium atrosepticum (strain SCRI 1043 / ATCC BAA-672) (Erwinia carotovora subsp. atroseptica), this protein is tRNA dimethylallyltransferase.